The primary structure comprises 301 residues: Probable alpha-L-glutamate ligase (301 aa).

One can recognise an ATP-grasp domain in the interval 104 to 287 (LQILARKGIG…VAGKIIEYLE (184 aa)). Residues K141, 178-179 (EY), D187, and 211-213 (RSN) each bind ATP. The Mg(2+) site is built by D248, E260, and N262. Mn(2+) is bound by residues D248, E260, and N262.

The protein belongs to the RimK family. Mg(2+) serves as cofactor. It depends on Mn(2+) as a cofactor.

The sequence is that of Probable alpha-L-glutamate ligase from Picosynechococcus sp. (strain ATCC 27264 / PCC 7002 / PR-6) (Agmenellum quadruplicatum).